We begin with the raw amino-acid sequence, 315 residues long: MQKPWVEKYRPQTLSEVVGHHEIIKRLTNYVEKKSMPHLLFSGSPGVGKTTAALALAKDLYGETWRENFLELNSSDERGIDVIRTKVKDFARTKPIGDAPFKVIFLDESDALTSDAQNALRRTMEKYSDICRFVLSCNYPSKIIPPIQSRCAIFRFSPLKTEDLVENLKEISEKENLTLEKGGIDAIIYVSEGDMRKAINVLQTAAAVSDTVTEEIVYKVASKARPDEIKKMTQLALNGKFVESREQLYNLMIDWGMSGEDILIQIFREVPNLDISEKEKVHLVEAIGECDFRIVEGSNERIQLSALLAKMGILE.

43–50 (GSPGVGKT) provides a ligand contact to ATP.

The protein belongs to the activator 1 small subunits family. RfcS subfamily. Heteromultimer composed of small subunits (RfcS) and large subunits (RfcL).

Part of the RFC clamp loader complex which loads the PCNA sliding clamp onto DNA. This chain is Replication factor C small subunit, found in Methanococcus maripaludis (strain C7 / ATCC BAA-1331).